A 382-amino-acid polypeptide reads, in one-letter code: MNGDKSTLSVIVAGGGTAGHIEPALAVADAIKAIDDTAVVTALGTARGLETTLVPERGYPLELIPPVPLPRKPTLDLLRLPGRVRASVRRTREVLDATGADVVVGFGGYVALPAYLAAGPGLLRRRRRIPIVVHEANASAGIANKIGARRAARVLAAVAGSGVSARGRSDAEILGIPVRASITALDRAALRAEARAHFGLPADGPVLLVFGGSQGARSLNEAVSGAAESLAAAGVAVLHAHGPKNTLDVPATPGGPPYVAVPYLSRMDLAYSAADAVICRSGAMTVAEVSAVGLPAVYVPLPHGNGEQELNARPVVAAGGGMIVADGDLSAGFVAETVIPLLRDPAQLEDMGRRAAGAGHRSAATEVARIVLDVAALTRGTR.

UDP-N-acetyl-alpha-D-glucosamine contacts are provided by residues 17–19 (TAG), Asn-137, Arg-179, Ser-213, and Gln-308.

This sequence belongs to the glycosyltransferase 28 family. MurG subfamily.

The protein resides in the cell membrane. The catalysed reaction is di-trans,octa-cis-undecaprenyl diphospho-N-acetyl-alpha-D-muramoyl-L-alanyl-D-glutamyl-meso-2,6-diaminopimeloyl-D-alanyl-D-alanine + UDP-N-acetyl-alpha-D-glucosamine = di-trans,octa-cis-undecaprenyl diphospho-[N-acetyl-alpha-D-glucosaminyl-(1-&gt;4)]-N-acetyl-alpha-D-muramoyl-L-alanyl-D-glutamyl-meso-2,6-diaminopimeloyl-D-alanyl-D-alanine + UDP + H(+). The protein operates within cell wall biogenesis; peptidoglycan biosynthesis. In terms of biological role, cell wall formation. Catalyzes the transfer of a GlcNAc subunit on undecaprenyl-pyrophosphoryl-MurNAc-pentapeptide (lipid intermediate I) to form undecaprenyl-pyrophosphoryl-MurNAc-(pentapeptide)GlcNAc (lipid intermediate II). In Rhodococcus jostii (strain RHA1), this protein is UDP-N-acetylglucosamine--N-acetylmuramyl-(pentapeptide) pyrophosphoryl-undecaprenol N-acetylglucosamine transferase.